The following is a 403-amino-acid chain: Acetate kinase (403 aa).

Position 7 (asparagine 7) interacts with Mg(2+). Residue lysine 14 coordinates ATP. A substrate-binding site is contributed by arginine 95. The active-site Proton donor/acceptor is aspartate 152. Residues 212 to 216 (HLGNG), 286 to 288 (DMR), and 335 to 339 (GIGEN) each bind ATP. Position 389 (glutamate 389) interacts with Mg(2+).

It belongs to the acetokinase family. In terms of assembly, homodimer. It depends on Mg(2+) as a cofactor. Requires Mn(2+) as cofactor.

It localises to the cytoplasm. The catalysed reaction is acetate + ATP = acetyl phosphate + ADP. It participates in metabolic intermediate biosynthesis; acetyl-CoA biosynthesis; acetyl-CoA from acetate: step 1/2. Catalyzes the formation of acetyl phosphate from acetate and ATP. Can also catalyze the reverse reaction. This is Acetate kinase from Desulfovibrio desulfuricans (strain ATCC 27774 / DSM 6949 / MB).